The chain runs to 224 residues: uncharacterized protein (224 aa).

The N-terminal stretch at 1–23 is a signal peptide; it reads MKKLLAAGIIGLLTVSIASPSFA. One can recognise a VWFA domain in the interval 31–224; it reads NVAVLFDGSG…WEKEAQKFTE (194 aa).

To B.subtilis YwmC.

This is an uncharacterized protein from Bacillus subtilis (strain 168).